The sequence spans 260 residues: NAD-capped RNA hydrolase NudC (260 aa).

Arg-69 is a substrate binding site. Zn(2+) is bound by residues Cys-98 and Cys-101. Glu-111 contacts substrate. Residues Cys-116 and Cys-119 each contribute to the Zn(2+) site. Substrate is bound at residue Tyr-124. The region spanning 125-248 is the Nudix hydrolase domain; it reads PQIAPCIIVA…TVARRLIEDT (124 aa). Residues Ala-158, Glu-174, and Glu-178 each contribute to the a divalent metal cation site. The short motif at 159-180 is the Nudix box element; the sequence is GFVEVGETLEQTVVREVMEESQ. Substrate is bound at residue 192–199; sequence QPWPFPHS. A divalent metal cation is bound at residue Glu-219. Substrate is bound at residue Ala-241.

It belongs to the Nudix hydrolase family. NudC subfamily. Homodimer. Requires Mg(2+) as cofactor. The cofactor is Mn(2+). Zn(2+) serves as cofactor.

The enzyme catalyses a 5'-end NAD(+)-phospho-ribonucleoside in mRNA + H2O = a 5'-end phospho-adenosine-phospho-ribonucleoside in mRNA + beta-nicotinamide D-ribonucleotide + 2 H(+). It carries out the reaction NAD(+) + H2O = beta-nicotinamide D-ribonucleotide + AMP + 2 H(+). It catalyses the reaction NADH + H2O = reduced beta-nicotinamide D-ribonucleotide + AMP + 2 H(+). Its function is as follows. mRNA decapping enzyme that specifically removes the nicotinamide adenine dinucleotide (NAD) cap from a subset of mRNAs by hydrolyzing the diphosphate linkage to produce nicotinamide mononucleotide (NMN) and 5' monophosphate mRNA. The NAD-cap is present at the 5'-end of some mRNAs and stabilizes RNA against 5'-processing. Has preference for mRNAs with a 5'-end purine. Catalyzes the hydrolysis of a broad range of dinucleotide pyrophosphates. This chain is NAD-capped RNA hydrolase NudC, found in Pectobacterium atrosepticum (strain SCRI 1043 / ATCC BAA-672) (Erwinia carotovora subsp. atroseptica).